The primary structure comprises 334 residues: Glyceraldehyde-3-phosphate dehydrogenase (334 aa).

Residues 12–13 (TI) and Gly-111 contribute to the NAD(+) site. 140 to 142 (SCN) provides a ligand contact to D-glyceraldehyde 3-phosphate. Residue Cys-141 is the Nucleophile of the active site. An NAD(+)-binding site is contributed by Arg-167. 192–193 (HG) provides a ligand contact to D-glyceraldehyde 3-phosphate. Residue Gln-298 coordinates NAD(+).

Belongs to the glyceraldehyde-3-phosphate dehydrogenase family. In terms of assembly, homotetramer.

The protein localises to the cytoplasm. The catalysed reaction is D-glyceraldehyde 3-phosphate + phosphate + NADP(+) = (2R)-3-phospho-glyceroyl phosphate + NADPH + H(+). It carries out the reaction D-glyceraldehyde 3-phosphate + phosphate + NAD(+) = (2R)-3-phospho-glyceroyl phosphate + NADH + H(+). It functions in the pathway carbohydrate degradation; glycolysis; pyruvate from D-glyceraldehyde 3-phosphate: step 1/5. The polypeptide is Glyceraldehyde-3-phosphate dehydrogenase (gap) (Pyrococcus abyssi (strain GE5 / Orsay)).